Reading from the N-terminus, the 110-residue chain is Putative zinc finger protein ORF110 (110 aa).

The C2H2-type zinc-finger motif lies at 3 to 26 (YVCTACKLKFHTFEEFKIHVHLFH).

The protein is Putative zinc finger protein ORF110 of Acidianus filamentous virus 1 (isolate United States/Yellowstone) (AFV-1).